We begin with the raw amino-acid sequence, 798 residues long: Nucleolin homolog 1 (798 aa).

The interval 1-548 is disordered; it reads MGFDSPRGRG…IISEEERRRQ (548 aa). Gly residues predominate over residues 8–34; it reads GRGGGGFRGGRGGGSGFTPRGGGGGFR. 3 stretches are compositionally biased toward basic and acidic residues: residues 59 to 75, 88 to 98, and 106 to 116; these read GGDR…DREG, GGDRGGFRGGD, and GGDRGNFRGGD. Gly residues-rich tracts occupy residues 150 to 164 and 171 to 184; these read RGGG…GRGG and GGRG…GGSR. 4 stretches are compositionally biased toward acidic residues: residues 196–205, 226–242, 258–278, and 287–317; these read SDGDDDEEEE, DDSG…DEEP, EDSD…DDDA, and VEED…EETE. The segment covering 328–350 has biased composition (polar residues); sequence SLKSVDSTKGKQVNLSKVATPTT. Acidic residues-rich tracts occupy residues 378-404 and 424-450; these read DDDS…EEED and IEED…EEDT. A compositionally biased stretch (low complexity) spans 467–476; that stretch reads AANRAAASAA. Residues 478-504 show a composition bias toward acidic residues; that stretch reads DSDEDEDEEDEEDVEEEDEEEEEEEDI. Basic and acidic residues predominate over residues 532 to 548; it reads VKSDGKSIISEEERRRQ. Positions 638-713 constitute an RRM domain; that stretch reads LQLFINALPG…HLVDVFYARH (76 aa). The disordered stretch occupies residues 736–798; that stretch reads PKVAADSSGD…FKKTGFKGKK (63 aa). The span at 743–762 shows a compositional bias: acidic residues; sequence SGDDSEEVASSDEGIQEVEE. The segment covering 783–798 has biased composition (basic residues); that stretch reads QQKKPQFKKTGFKGKK.

Identified in an mRNP granule complex containing untranslated mRNAs.

The protein localises to the nucleus. It is found in the nucleolus. Functionally, nucleolin is the major nucleolar protein of growing eukaryotic cells. It is found associated with intranucleolar chromatin and pre-ribosomal particles. It induces chromatin decondensation by binding to histone H1. It is thought to play a role in pre-rRNA transcription and ribosome assembly. May play a role in the process of transcriptional elongation. Involved in phase separation into sub-nucleolar condensates. The polypeptide is Nucleolin homolog 1 (Caenorhabditis elegans).